The following is a 2104-amino-acid chain: Replication polyprotein (2104 aa).

The next 2 helical transmembrane spans lie at 23–43 (LVAS…FASS) and 70–90 (FNPF…YAFI). A coiled-coil region spans residues 289 to 313 (VRVGEIREKVATLRNKLNTLQTKEL). One can recognise an SF3 helicase domain in the interval 329–501 (LEVLLIEVKV…NKMPKRGAID (173 aa)). The viral peptidase stretch occupies residues 1499–1520 (GDCGSPIVLASGKKAGKLIGFH). Positions 1838-1965 (PNYFDADYKN…SVSDEYKDKY (128 aa)) constitute a RdRp catalytic domain.

Post-translationally, specific enzymatic cleavages in vivo yield mature proteins.

Its subcellular location is the membrane. It catalyses the reaction RNA(n) + a ribonucleoside 5'-triphosphate = RNA(n+1) + diphosphate. In terms of biological role, the peptidase activity is involved in polyprotein maturation, possibly along with hosts proteases. Transmembrane protein may be surface viral glycoprotein. RNA-directed RNA polymerase replicates the viral genome. The sequence is that of Replication polyprotein from Drosophila melanogaster (Fruit fly).